A 108-amino-acid chain; its full sequence is Glutaredoxin 4 (108 aa).

The 103-residue stretch at 5–107 (IKKIQNQIQN…KTISICDKLN (103 aa)) folds into the Glutaredoxin domain. Lys22 is a glutathione binding site. Cys30 provides a ligand contact to [2Fe-2S] cluster. Glutathione is bound by residues Arg59, Phe71, and 84–85 (CN).

It belongs to the glutaredoxin family. Monothiol subfamily. As to quaternary structure, homodimer.

Its subcellular location is the cytoplasm. Monothiol glutaredoxin involved in the biogenesis of iron-sulfur clusters. This is Glutaredoxin 4 (grxD) from Buchnera aphidicola subsp. Baizongia pistaciae (strain Bp).